Reading from the N-terminus, the 201-residue chain is Ras-related protein Rab-1B (201 aa).

Methionine 1 carries the post-translational modification N-acetylmethionine. Residues serine 17, glycine 18, valine 19, glycine 20, lysine 21, serine 22, cysteine 23, tyrosine 33, threonine 34, glutamate 35, serine 36, serine 39, and threonine 40 each contribute to the GTP site. Serine 22 lines the Mg(2+) pocket. The short motif at 30–45 (DDTYTESYISTIGVDF) is the Switch 1 element. Residues threonine 40 and aspartate 63 each coordinate Mg(2+). The interval 64–83 (TAGQERFRTITSSYYRGAHG) is switch 2 region; required for interaction with REP1/CHM. The Switch 2 motif lies at 65–80 (AGQERFRTITSSYYRG). Glycine 66, asparagine 121, lysine 122, aspartate 124, serine 151, alanine 152, and lysine 153 together coordinate GTP. Residues 174-201 (GPGAASGGERPNLKIDSTPVKPASGGCC) are disordered. Residues cysteine 200 and cysteine 201 are each lipidated (S-geranylgeranyl cysteine). Cysteine methyl ester is present on cysteine 201.

It belongs to the small GTPase superfamily. Rab family. Interacts with MICAL1 and MICAL2. Interacts (GTP-bound form) with MICALCL, MICAL1 and MILCAL3. Interacts with GDI1; the interaction requires the GDP-bound state. Interacts with CHM/REP1; the interaction requires the GDP-bound form and is necessary for prenylation by GGTase II. Interacts with RabGAP TBC1D20. Interacts (in GDP-bound form) with lipid phosphatase MTMR6 (via GRAM domain); the interaction regulates MTMR6 recruitment to the endoplasmic reticulum-Golgi intermediate compartment. Interacts (in GDP-bound form) with lipid phosphatase MTMR7. Mg(2+) serves as cofactor. Post-translationally, prenylated; by GGTase II, only after interaction of the substrate with Rab escort protein 1 (REP1).

The protein resides in the cytoplasm. The protein localises to the membrane. It localises to the preautophagosomal structure membrane. Its subcellular location is the perinuclear region. The catalysed reaction is GTP + H2O = GDP + phosphate + H(+). Its activity is regulated as follows. Regulated by guanine nucleotide exchange factors (GEFs) which promote the exchange of bound GDP for free GTP. Regulated by GTPase activating proteins (GAPs) including TBC1D20 which increases the GTP hydrolysis activity. Inhibited by GDP dissociation inhibitors (GDIs). Its function is as follows. The small GTPases Rab are key regulators of intracellular membrane trafficking, from the formation of transport vesicles to their fusion with membranes. Rabs cycle between an inactive GDP-bound form and an active GTP-bound form that is able to recruit to membranes different set of downstream effectors directly responsible for vesicle formation, movement, tethering and fusion. Plays a role in the initial events of the autophagic vacuole development which take place at specialized regions of the endoplasmic reticulum. Regulates vesicular transport between the endoplasmic reticulum and successive Golgi compartments. Required to modulate the compacted morphology of the Golgi. Promotes the recruitment of lipid phosphatase MTMR6 to the endoplasmic reticulum-Golgi intermediate compartment. This chain is Ras-related protein Rab-1B (Rab1b), found in Mus musculus (Mouse).